The chain runs to 167 residues: Aphrodisin (167 aa).

Residues M1 to A16 form the signal peptide. The residue at position 17 (Q17) is a Pyrrolidone carboxylic acid. 2 disulfides stabilise this stretch: C54–C58 and C73–C165. N57 and N85 each carry an N-linked (GlcNAc...) asparagine glycan.

It belongs to the calycin superfamily. Lipocalin family. As to expression, expressed in the vagina, uterus, and Bartholin's glands of female hamsters. Secreted in vaginal discharge.

The protein localises to the secreted. Functionally, acts as an aphrodisiac pheromone, reliably eliciting copulatory behavior from male hamster. The sequence is that of Aphrodisin from Cricetus cricetus (Black-bellied hamster).